Consider the following 209-residue polypeptide: Small ribosomal subunit protein uS4 (209 aa).

Positions 99–164 (GRLDSVVYRM…QLRVKAALEA (66 aa)) constitute an S4 RNA-binding domain.

The protein belongs to the universal ribosomal protein uS4 family. Part of the 30S ribosomal subunit. Contacts protein S5. The interaction surface between S4 and S5 is involved in control of translational fidelity.

In terms of biological role, one of the primary rRNA binding proteins, it binds directly to 16S rRNA where it nucleates assembly of the body of the 30S subunit. With S5 and S12 plays an important role in translational accuracy. The polypeptide is Small ribosomal subunit protein uS4 (Aromatoleum aromaticum (strain DSM 19018 / LMG 30748 / EbN1) (Azoarcus sp. (strain EbN1))).